The primary structure comprises 378 residues: Alpha-D-ribose 1-methylphosphonate 5-triphosphate diphosphatase (378 aa).

This sequence belongs to the metallo-dependent hydrolases superfamily.

The enzyme catalyses alpha-D-ribose 1-methylphosphonate 5-triphosphate + H2O = alpha-D-ribose 1-methylphosphonate 5-phosphate + diphosphate + H(+). Its function is as follows. Catalyzes the hydrolysis of alpha-D-ribose 1-methylphosphonate triphosphate (RPnTP) to form alpha-D-ribose 1-methylphosphonate phosphate (PRPn) and diphosphate. The protein is Alpha-D-ribose 1-methylphosphonate 5-triphosphate diphosphatase (phnM) of Escherichia coli (strain K12).